Consider the following 438-residue polypeptide: Probable chaperone protein ClpB 1 (438 aa).

A coiled-coil region spans residues 1-94 (MNTADTRQRL…NNRKIEARQA (94 aa)). A linker region spans residues 1 to 118 (MNTADTRQRL…IADIVSRWTG (118 aa)). Residues 128-345 (ERQKLLGIES…RIDEVILFTP (218 aa)) form an NBD2 region. Position 178–185 (178–185 (GPTGVGKT)) interacts with ATP. The tract at residues 346–438 (LTRENLREIV…ENDAIVMKKK (93 aa)) is C-terminal.

It belongs to the ClpA/ClpB family. As to quaternary structure, homohexamer. The oligomerization is ATP-dependent.

It localises to the cytoplasm. Part of a stress-induced multi-chaperone system, it is involved in the recovery of the cell from heat-induced damage, in cooperation with DnaK, DnaJ and GrpE. Acts before DnaK, in the processing of protein aggregates. Protein binding stimulates the ATPase activity; ATP hydrolysis unfolds the denatured protein aggregates, which probably helps expose new hydrophobic binding sites on the surface of ClpB-bound aggregates, contributing to the solubilization and refolding of denatured protein aggregates by DnaK. This chain is Probable chaperone protein ClpB 1 (clpB1), found in Chlorobaculum tepidum (strain ATCC 49652 / DSM 12025 / NBRC 103806 / TLS) (Chlorobium tepidum).